The following is a 76-amino-acid chain: MLVISRKSGESFMIGDSIEVKILRIEGSEVKIGISAPSHVKIYRAEIYQKIVKENKMAVQVDIVDLSEVIFLDRNK.

Belongs to the CsrA/RsmA family. In terms of assembly, homodimer; the beta-strands of each monomer intercalate to form a hydrophobic core, while the alpha-helices form wings that extend away from the core.

The protein resides in the cytoplasm. Its function is as follows. A translational regulator that binds mRNA to regulate translation initiation and/or mRNA stability. Usually binds in the 5'-UTR at or near the Shine-Dalgarno sequence preventing ribosome-binding, thus repressing translation. Its main target seems to be the major flagellin gene, while its function is anatagonized by FliW. This Pseudothermotoga lettingae (strain ATCC BAA-301 / DSM 14385 / NBRC 107922 / TMO) (Thermotoga lettingae) protein is Translational regulator CsrA.